Consider the following 116-residue polypeptide: Large ribosomal subunit protein bL20 (116 aa).

This sequence belongs to the bacterial ribosomal protein bL20 family.

Its function is as follows. Binds directly to 23S ribosomal RNA and is necessary for the in vitro assembly process of the 50S ribosomal subunit. It is not involved in the protein synthesizing functions of that subunit. The protein is Large ribosomal subunit protein bL20 of Bacteroides thetaiotaomicron (strain ATCC 29148 / DSM 2079 / JCM 5827 / CCUG 10774 / NCTC 10582 / VPI-5482 / E50).